The sequence spans 121 residues: Ribosome-binding factor A (121 aa).

Belongs to the RbfA family. As to quaternary structure, monomer. Binds 30S ribosomal subunits, but not 50S ribosomal subunits or 70S ribosomes.

It is found in the cytoplasm. In terms of biological role, one of several proteins that assist in the late maturation steps of the functional core of the 30S ribosomal subunit. Associates with free 30S ribosomal subunits (but not with 30S subunits that are part of 70S ribosomes or polysomes). Required for efficient processing of 16S rRNA. May interact with the 5'-terminal helix region of 16S rRNA. The sequence is that of Ribosome-binding factor A from Hydrogenovibrio crunogenus (strain DSM 25203 / XCL-2) (Thiomicrospira crunogena).